Reading from the N-terminus, the 59-residue chain is MNNVKELSMTELQTITGGARSYGNGVYCNNKKCWVNRGEATQSIIGGMISGWASGLAGM.

The propeptide occupies 1-18 (MNNVKELSMTELQTITGG). An intrachain disulfide couples C28 to C33.

The protein belongs to the bacteriocin class IIA/YGNGV family.

It is found in the secreted. Its function is as follows. Bactericidal activity; inhibits closely related Lactobacilli, Listeria monocytogenes and ivanovvi, Enterococcus faecalis, Carnobacterium sp and Brocothrix thermosphacta. In Latilactobacillus curvatus (Lactobacillus curvatus), this protein is Bacteriocin curvacin-A (curA).